Reading from the N-terminus, the 876-residue chain is Probable LRR receptor-like protein kinase At1g51890 (876 aa).

The N-terminal stretch at 1–19 (MRFLSFLIFVFAVLGLVQA) is a signal peptide. The Extracellular portion of the chain corresponds to 20-500 (QDQSGFISLD…TGKNSTNVVA (481 aa)). 13 N-linked (GlcNAc...) asparagine glycosylation sites follow: Asn45, Asn90, Asn138, Asn177, Asn251, Asn259, Asn284, Asn290, Asn327, Asn335, Asn397, Asn412, and Asn417. LRR repeat units follow at residues 407–430 (QIIS…SKLT), 431–453 (HLRE…FSDM), and 455–476 (NLTL…ETLQ). Residues Asn455, Asn460, Asn468, Asn481, and Asn494 are each glycosylated (N-linked (GlcNAc...) asparagine). A helical membrane pass occupies residues 501 to 521 (IAASVASVFAVLVILAIVFVV). At 522-872 (IRKKQRTNEA…FSPSSASDFS (351 aa)) the chain is on the cytoplasmic side. A Phosphothreonine modification is found at Thr561. The Protein kinase domain maps to 570 to 842 (KNFERVLGKG…HVVMELNECL (273 aa)). Residues 576-584 (LGKGGFGTV) and Lys597 contribute to the ATP site. Tyr642 is modified (phosphotyrosine). Asp694 functions as the Proton acceptor in the catalytic mechanism. 2 positions are modified to phosphothreonine: Thr729 and Thr734. Tyr742 is modified (phosphotyrosine).

This sequence belongs to the protein kinase superfamily. Ser/Thr protein kinase family.

It is found in the cell membrane. It carries out the reaction L-seryl-[protein] + ATP = O-phospho-L-seryl-[protein] + ADP + H(+). The catalysed reaction is L-threonyl-[protein] + ATP = O-phospho-L-threonyl-[protein] + ADP + H(+). This Arabidopsis thaliana (Mouse-ear cress) protein is Probable LRR receptor-like protein kinase At1g51890.